A 331-amino-acid chain; its full sequence is Putative lipoprotein YerB (331 aa).

The N-terminal stretch at 1 to 19 (MKKWMTVCALCFVFFLLVS) is a signal peptide. The N-palmitoyl cysteine moiety is linked to residue Cys-20. Cys-20 carries S-diacylglycerol cysteine lipidation. Position 97 is a phosphothreonine (Thr-97). Ser-103 is modified (phosphoserine).

In terms of assembly, interacts with PcrA. The interaction is not essential for cell viability or repair of UV-induced lesions.

The protein localises to the cell membrane. The sequence is that of Putative lipoprotein YerB (yerB) from Bacillus subtilis (strain 168).